We begin with the raw amino-acid sequence, 211 residues long: Arginine exporter protein ArgO (211 aa).

6 consecutive transmembrane segments (helical) span residues 1 to 21, 37 to 57, 68 to 88, 111 to 131, 147 to 167, and 179 to 199; these read MISY…PLGP, LMIA…GIFG, LLAL…FGAL, IIAT…DTFV, WFAL…ALLA, and AQRI…FQLA.

The protein belongs to the LysE/ArgO transporter (TC 2.A.75) family.

The protein localises to the cell inner membrane. The catalysed reaction is L-arginine(in) = L-arginine(out). Involved in the export of arginine. Important to control the intracellular level of arginine and the correct balance between arginine and lysine. The chain is Arginine exporter protein ArgO from Salmonella schwarzengrund (strain CVM19633).